The sequence spans 72 residues: Translation initiation factor IF-1 (72 aa).

The S1-like domain maps to 1–72 (MAKEDCIEME…SKGRIIYRAR (72 aa)).

The protein belongs to the IF-1 family. As to quaternary structure, component of the 30S ribosomal translation pre-initiation complex which assembles on the 30S ribosome in the order IF-2 and IF-3, IF-1 and N-formylmethionyl-tRNA(fMet); mRNA recruitment can occur at any time during PIC assembly.

Its subcellular location is the cytoplasm. Its function is as follows. One of the essential components for the initiation of protein synthesis. Stabilizes the binding of IF-2 and IF-3 on the 30S subunit to which N-formylmethionyl-tRNA(fMet) subsequently binds. Helps modulate mRNA selection, yielding the 30S pre-initiation complex (PIC). Upon addition of the 50S ribosomal subunit IF-1, IF-2 and IF-3 are released leaving the mature 70S translation initiation complex. This is Translation initiation factor IF-1 from Pseudoalteromonas atlantica (strain T6c / ATCC BAA-1087).